A 339-amino-acid chain; its full sequence is Phospho-N-acetylmuramoyl-pentapeptide-transferase (339 aa).

10 helical membrane-spanning segments follow: residues 4-24, 53-73, 80-100, 113-133, 145-165, 176-196, 202-222, 228-248, 253-273, and 318-338; these read TTII…PFFI, MGGT…AFVL, AFGA…IGFL, GLTA…FYLV, LFGF…FWVV, GIDG…SVIA, FDVL…FVYN, VFMG…ISIT, WTLL…MLQV, and VDFF…AILY.

The protein belongs to the glycosyltransferase 4 family. MraY subfamily. The cofactor is Mg(2+).

It is found in the cell membrane. It catalyses the reaction UDP-N-acetyl-alpha-D-muramoyl-L-alanyl-gamma-D-glutamyl-L-lysyl-D-alanyl-D-alanine + di-trans,octa-cis-undecaprenyl phosphate = Mur2Ac(oyl-L-Ala-gamma-D-Glu-L-Lys-D-Ala-D-Ala)-di-trans,octa-cis-undecaprenyl diphosphate + UMP. The protein operates within cell wall biogenesis; peptidoglycan biosynthesis. Its function is as follows. Catalyzes the initial step of the lipid cycle reactions in the biosynthesis of the cell wall peptidoglycan: transfers peptidoglycan precursor phospho-MurNAc-pentapeptide from UDP-MurNAc-pentapeptide onto the lipid carrier undecaprenyl phosphate, yielding undecaprenyl-pyrophosphoryl-MurNAc-pentapeptide, known as lipid I. This is Phospho-N-acetylmuramoyl-pentapeptide-transferase from Streptococcus mutans serotype c (strain ATCC 700610 / UA159).